Reading from the N-terminus, the 2437-residue chain is Neurogenic locus notch homolog protein 1 (2437 aa).

A signal peptide spans 1–20 (MNRFLVKLTLLTAASLATVA). EGF-like domains follow at residues 21 to 57 (QGQR…AQCQ), 58 to 98 (FPNP…RLCL), 101 to 138 (VNHA…KTCQ), and 139 to 175 (LADP…QTCR). Topologically, residues 21 to 1726 (QGQRCSEYCQ…GGPPKTGEMY (1706 aa)) are extracellular. Intrachain disulfides connect C25-C35, C29-C45, C47-C56, C62-C73, C67-C86, C88-C97, C105-C116, C110-C126, C128-C137, C143-C154, C148-C163, C165-C174, C181-C194, C188-C203, C205-C214, C221-C232, C226-C242, C244-C253, C260-C271, C265-C280, C282-C291, C298-C311, C305-C320, C322-C331, C338-C349, C343-C358, C360-C369, C375-C386, C380-C397, C399-C408, C415-C428, C422-C437, C439-C448, C455-C466, C460-C475, C477-C486, C493-C503, C498-C512, C514-C523, C530-C541, C535-C550, C552-C561, C568-C578, C573-C587, C589-C598, C605-C616, C610-C625, C627-C636, C643-C653, C648-C662, C664-C673, C680-C691, C685-C700, C702-C711, C718-C728, C723-C737, C739-C748, C755-C766, C760-C775, C777-C786, C793-C804, C798-C813, C815-C824, C831-C842, C836-C853, C855-C864, C871-C882, C876-C891, C893-C902, C909-C920, C914-C929, C931-C940, C947-C958, C952-C967, C969-C978, C985-C996, C990-C1005, C1007-C1016, C1023-C1034, C1028-C1043, C1045-C1054, C1061-C1072, C1066-C1081, C1083-C1092, C1099-C1120, C1114-C1129, C1131-C1140, C1147-C1158, C1152-C1167, C1169-C1178, C1185-C1196, C1190-C1205, C1207-C1216, C1223-C1242, C1236-C1251, C1253-C1262, C1269-C1282, C1274-C1291, C1293-C1302, C1309-C1320, C1314-C1332, C1334-C1343, C1350-C1361, C1355-C1370, C1372-C1381, C1389-C1400, C1394-C1411, C1413-C1422, C1447-C1470, C1452-C1465, and C1461-C1477. The EGF-like 5; calcium-binding domain maps to 177-215 (DVNECAVSPSPCRNGGTCINEVGSYLCRCPPEYTGPHCQ). One can recognise an EGF-like 6 domain in the interval 217-254 (LYQPCLPSPCRSGGTCVQTSDTTHTCSCLPGFTGQTCE). A glycan (O-linked (Fuc...) threonine; alternate) is linked at T231. A glycan (O-linked (GalNAc...) threonine; alternate) is linked at T231. Residues 256 to 292 (NVDDCTQHACENGGPCIDGINTYNCHCDKHWTGQYCT) form the EGF-like 7; calcium-binding domain. One can recognise an EGF-like 8; calcium-binding domain in the interval 294–332 (DVDECELSPNACQNGGTCHNTIGGFHCVCVNGWTGDDCS). Residues 334-370 (NIDDCASAACSHGATCHDRVASFFCECPHGRTGLLCH) enclose the EGF-like 9; calcium-binding domain. The EGF-like 10 domain occupies 371-409 (LDDACISNPCQKGSNCDTNPVSGKAICTCPPGYTGSACN). One can recognise an EGF-like 11; calcium-binding domain in the interval 411 to 449 (DIDECSLGANPCEHGGRCLNTKGSFQCKCLQGYEGPRCE). An EGF-like 12; calcium-binding domain is found at 451–487 (DVNECKSNPCQNDATCLDQIGGFHCICMPGYEGVFCQ). The region spanning 489 to 524 (NSDDCASQPCLNGKCIDKINSFHCECPKGFSGSLCQ) is the EGF-like 13; calcium-binding domain. An EGF-like 14; calcium-binding domain is found at 526-562 (DVDECASTPCKNGAKCTDGPNKYTCECTPGFSGIHCE). The EGF-like 15; calcium-binding domain occupies 564 to 599 (DINECASSPCHYGVCRDGVASFTCDCRPGYTGRLCE). The EGF-like 16; calcium-binding domain maps to 601-637 (NINECLSQPCRNGGTCQDRENAYICTCPKGTTGVNCE). The EGF-like 17; calcium-binding domain maps to 639–674 (NIDDCKRKPCDYGKCIDKINGYECVCEPGYSGSMCN). In terms of domain architecture, EGF-like 18; calcium-binding spans 676–712 (NIDDCALNPCHNGGTCIDGVNSFTCLCPDGFRDATCL). The 36-residue stretch at 714 to 749 (QHNECSSNPCIHGSCLDQINSYRCVCEAGWMGRNCD) folds into the EGF-like 19; calcium-binding domain. Residues 751 to 787 (NINECLSNPCVNGGTCKDMTSGYLCTCRAGFSGPNCQ) enclose the EGF-like 20; calcium-binding domain. In terms of domain architecture, EGF-like 21; calcium-binding spans 789-825 (NINECASNPCLNQGSCIDDVAGFKCNCMLPYTGEVCE). One can recognise an EGF-like 22 domain in the interval 827 to 865 (VLAPCSPRPCKNGGVCRESEDFQSFSCNCPAGWQGQTCE). The EGF-like 23; calcium-binding domain maps to 867 to 903 (DINECVRNPCTNGGVCENLRGGFQCRCNPGFTGALCE). The region spanning 905–941 (DIDDCEPNPCSNGGVCQDRVNGFVCVCLAGFRGERCA) is the EGF-like 24; calcium-binding domain. One can recognise an EGF-like 25; calcium-binding domain in the interval 943-979 (DIDECVSAPCRNGGNCTDCVNSYTCSCPAGFSGINCE). N957 carries an N-linked (GlcNAc...) asparagine glycan. Positions 981–1017 (NTPDCTESSCFNGGTCVDGISSFSCVCLPGFTGNYCQ) constitute an EGF-like 26 domain. Positions 1019-1055 (DVNECDSRPCQNGGSCQDGYGTYKCTCPHGYTGLNCQ) constitute an EGF-like 27; calcium-binding domain. EGF-like domains are found at residues 1057 to 1093 (LVRW…IYCD) and 1095 to 1141 (PSVS…SYCQ). One can recognise an EGF-like 30; calcium-binding domain in the interval 1143–1179 (QVDECQPNPCQNGATCTDYLGGYSCECVPGYHGMNCS). A glycan (N-linked (GlcNAc...) asparagine) is linked at N1177. The EGF-like 31; calcium-binding domain occupies 1181-1217 (EINECLSQPCQNGGTCIDLVNTYKCSCPRGTQGVHCE). The EGF-like 32; calcium-binding domain maps to 1219–1263 (DIDDCSPSVDPLTGEPRCFNGGRCVDRVGGYGCVCPAGFVGERCE). 4 consecutive EGF-like domains span residues 1265–1303 (DVNE…KRCE), 1305–1344 (VFNG…SSCE), 1346–1382 (DSQS…HECQ), and 1385–1423 (MDSP…LLCH). O-linked (Fuc...) threonine; alternate glycosylation is present at T1399. The O-linked (GalNAc...) threonine; alternate glycan is linked to T1399. 3 LNR repeats span residues 1447-1487 (CEIA…PWQN), 1488-1525 (CSAA…LEGQ), and 1526-1566 (CNPL…VPQK). An N-linked (GlcNAc...) asparagine glycan is attached at N1487. Cystine bridges form between C1488–C1512, C1494–C1507, C1503–C1519, C1526–C1552, C1534–C1547, and C1543–C1559. An N-linked (GlcNAc...) asparagine glycan is attached at N1585. Residues 1727–1747 (PMFLVLLALAVLALAAVGVVV) form a helical membrane-spanning segment. Residues 1748 to 2437 (SRKRKREHGQ…QMNHIPEAFK (690 aa)) are Cytoplasmic-facing. The segment at 1770–1790 (KKKRREPVGEDSVGLKPLKNS) is disordered. ANK repeat units lie at residues 1867 to 1910 (DGFT…NLHN), 1915 to 1944 (TGET…DANV), 1948 to 1978 (MGRT…DLDA), 1982 to 2011 (DGTT…DPNA), 2015 to 2044 (SGKS…NKDL), and 2048 to 2077 (KEET…NRDI). 2 disordered regions span residues 2127–2174 (IKPS…GGIM) and 2356–2437 (RMAP…EAFK). A compositionally biased stretch (polar residues) spans 2356 to 2387 (RMAPPISSTQFLTPPSQHSYSNPMDNTPNHQQ). The segment covering 2396–2411 (PSAGSPDQWSSSSPHS) has biased composition (low complexity). Residues 2412 to 2429 (NLSDWSEGISSPPTSMQM) show a composition bias toward polar residues.

Belongs to the NOTCH family. In terms of processing, synthesized in the endoplasmic reticulum as an inactive form which is proteolytically cleaved by a furin-like convertase in the trans-Golgi network before it reaches the plasma membrane to yield an active, ligand-accessible form. Cleavage results in a C-terminal fragment N(TM) and a N-terminal fragment N(EC). Following ligand binding, it is cleaved by adam17 to yield a membrane-associated intermediate fragment called notch extracellular truncation (NEXT). Following endocytosis, this fragment is then cleaved by presenilin dependent gamma-secretase to release a Notch-derived peptide containing the intracellular domain (NICD) from the membrane. Post-translationally, O-glycosylated on the EGF-like domains. Contains both O-linked fucose and O-linked glucose. O-linked glycosylation by galnt11 is involved in determination of left/right symmetry: glycosylation promotes activation of notch1, possibly by promoting cleavage by adam17, modulating the balance between motile and immotile (sensory) cilia at the left-right organiser (LRO).

Its subcellular location is the cell membrane. It localises to the nucleus. Its function is as follows. Functions as a receptor for membrane-bound ligands Jagged-1 (JAG1), Jagged-2 (JAG2) and Delta-1 (DLL1) to regulate cell-fate determination. Upon ligand activation through the released notch intracellular domain (NICD) it forms a transcriptional activator complex with RBPJ/RBPSUH and activates genes of the enhancer of split locus. Affects the implementation of differentiation, proliferation and apoptotic programs. Involved in angiogenesis; negatively regulates endothelial cell proliferation and migration and angiogenic sprouting. Involved in the maturation of both CD4(+) and CD8(+) cells in the thymus. Important for follicular differentiation and possibly cell fate selection within the follicle. During cerebellar development, functions as a receptor for neuronal DNER and is involved in the differentiation of Bergmann glia. Represses neuronal and myogenic differentiation. May play an essential role in postimplantation development, probably in some aspect of cell specification and/or differentiation. May be involved in mesoderm development, somite formation and neurogenesis. Involved in determination of left/right symmetry by modulating the balance between motile and immotile (sensory) cilia at the left-right organiser (LRO). The sequence is that of Neurogenic locus notch homolog protein 1 (notch1a) from Danio rerio (Zebrafish).